The sequence spans 94 residues: HssA/B-like protein 49 (94 aa).

A disordered region spans residues 1–20; it reads MTLFSSISSISNPMTSSKSS.

Belongs to the hssA/B family.

This is HssA/B-like protein 49 (hssl49) from Dictyostelium discoideum (Social amoeba).